The following is a 316-amino-acid chain: HPr kinase/phosphorylase (316 aa).

Residues His-143 and Lys-164 contribute to the active site. 158–165 lines the ATP pocket; sequence GEAGSGKS. Ser-165 is a binding site for Mg(2+). Asp-182 acts as the Proton acceptor; for phosphorylation activity. Proton donor; for dephosphorylation activity in catalysis. Positions 206–215 are important for the catalytic mechanism of both phosphorylation and dephosphorylation; that stretch reads LEVRGLGVLN. Glu-207 contacts Mg(2+). Arg-251 is a catalytic residue. Positions 272–277 are important for the catalytic mechanism of dephosphorylation; sequence PVMPGR.

It belongs to the HPrK/P family. Homohexamer. Mg(2+) is required as a cofactor.

It carries out the reaction [HPr protein]-L-serine + ATP = [HPr protein]-O-phospho-L-serine + ADP + H(+). The enzyme catalyses [HPr protein]-O-phospho-L-serine + phosphate + H(+) = [HPr protein]-L-serine + diphosphate. Catalyzes the ATP- as well as the pyrophosphate-dependent phosphorylation of a specific serine residue in HPr, a phosphocarrier protein of the phosphoenolpyruvate-dependent sugar phosphotransferase system (PTS). HprK/P also catalyzes the pyrophosphate-producing, inorganic phosphate-dependent dephosphorylation (phosphorolysis) of seryl-phosphorylated HPr (P-Ser-HPr). This chain is HPr kinase/phosphorylase, found in Stenotrophomonas maltophilia (strain R551-3).